The chain runs to 279 residues: Ribosomal RNA small subunit methyltransferase A (279 aa).

Asparagine 28, leucine 30, glycine 55, glutamate 77, aspartate 103, and asparagine 122 together coordinate S-adenosyl-L-methionine.

The protein belongs to the class I-like SAM-binding methyltransferase superfamily. rRNA adenine N(6)-methyltransferase family. RsmA subfamily.

It is found in the cytoplasm. It carries out the reaction adenosine(1518)/adenosine(1519) in 16S rRNA + 4 S-adenosyl-L-methionine = N(6)-dimethyladenosine(1518)/N(6)-dimethyladenosine(1519) in 16S rRNA + 4 S-adenosyl-L-homocysteine + 4 H(+). In terms of biological role, specifically dimethylates two adjacent adenosines (A1518 and A1519) in the loop of a conserved hairpin near the 3'-end of 16S rRNA in the 30S particle. May play a critical role in biogenesis of 30S subunits. The polypeptide is Ribosomal RNA small subunit methyltransferase A (Ruegeria pomeroyi (strain ATCC 700808 / DSM 15171 / DSS-3) (Silicibacter pomeroyi)).